The sequence spans 152 residues: D-aminoacyl-tRNA deacylase (152 aa).

Residues 142-143 (GP) carry the Gly-cisPro motif, important for rejection of L-amino acids motif.

The protein belongs to the DTD family. In terms of assembly, homodimer.

The protein resides in the cytoplasm. It carries out the reaction glycyl-tRNA(Ala) + H2O = tRNA(Ala) + glycine + H(+). The catalysed reaction is a D-aminoacyl-tRNA + H2O = a tRNA + a D-alpha-amino acid + H(+). Functionally, an aminoacyl-tRNA editing enzyme that deacylates mischarged D-aminoacyl-tRNAs. Also deacylates mischarged glycyl-tRNA(Ala), protecting cells against glycine mischarging by AlaRS. Acts via tRNA-based rather than protein-based catalysis; rejects L-amino acids rather than detecting D-amino acids in the active site. By recycling D-aminoacyl-tRNA to D-amino acids and free tRNA molecules, this enzyme counteracts the toxicity associated with the formation of D-aminoacyl-tRNA entities in vivo and helps enforce protein L-homochirality. This is D-aminoacyl-tRNA deacylase from Burkholderia cenocepacia (strain ATCC BAA-245 / DSM 16553 / LMG 16656 / NCTC 13227 / J2315 / CF5610) (Burkholderia cepacia (strain J2315)).